Reading from the N-terminus, the 108-residue chain is RGENVRPTVSIYCPSLEQRNSGSASTVCLVDKFYPGGAQVTWKGDNKVISSGVDTSDKIKDKDNTYSMSSTLTMSSEEFKYSTMTCEVTHPTLTPALAKSFQTSECTF.

Positions 7-102 (PTVSIYCPSL…LTPALAKSFQ (96 aa)) constitute an Ig-like domain. Intrachain disulfides connect C13-C106 and C28-C86.

This is Ig light chain C region from Aquarana catesbeiana (American bullfrog).